The chain runs to 697 residues: Elongation factor G (697 aa).

A tr-type G domain is found at 8–290 (ERYRNIGIMA…AVLSYMPSPV (283 aa)). GTP-binding positions include 17-24 (AHIDAGKT), 88-92 (DTPGH), and 142-145 (NKMD).

It belongs to the TRAFAC class translation factor GTPase superfamily. Classic translation factor GTPase family. EF-G/EF-2 subfamily.

It localises to the cytoplasm. Its function is as follows. Catalyzes the GTP-dependent ribosomal translocation step during translation elongation. During this step, the ribosome changes from the pre-translocational (PRE) to the post-translocational (POST) state as the newly formed A-site-bound peptidyl-tRNA and P-site-bound deacylated tRNA move to the P and E sites, respectively. Catalyzes the coordinated movement of the two tRNA molecules, the mRNA and conformational changes in the ribosome. The protein is Elongation factor G of Nitrosococcus oceani (strain ATCC 19707 / BCRC 17464 / JCM 30415 / NCIMB 11848 / C-107).